Consider the following 457-residue polypeptide: Siroheme synthase (457 aa).

The interval 1–204 is precorrin-2 dehydrogenase /sirohydrochlorin ferrochelatase; sequence MDHLPIFCQL…ADEKAVNATT (204 aa). NAD(+) contacts are provided by residues 22–23 and 43–44; these read DV and LT. Residue serine 128 is modified to Phosphoserine. The tract at residues 216–457 is uroporphyrinogen-III C-methyltransferase; it reads GEVVLVGAGP…RDKLNWFSNY (242 aa). Proline 225 is a binding site for S-adenosyl-L-methionine. The Proton acceptor role is filled by aspartate 248. The active-site Proton donor is the lysine 270. S-adenosyl-L-methionine contacts are provided by residues 301-303, isoleucine 306, 331-332, methionine 382, and glycine 411; these read GGD and TA.

The protein in the N-terminal section; belongs to the precorrin-2 dehydrogenase / sirohydrochlorin ferrochelatase family. In the C-terminal section; belongs to the precorrin methyltransferase family.

The enzyme catalyses uroporphyrinogen III + 2 S-adenosyl-L-methionine = precorrin-2 + 2 S-adenosyl-L-homocysteine + H(+). The catalysed reaction is precorrin-2 + NAD(+) = sirohydrochlorin + NADH + 2 H(+). It carries out the reaction siroheme + 2 H(+) = sirohydrochlorin + Fe(2+). The protein operates within cofactor biosynthesis; adenosylcobalamin biosynthesis; precorrin-2 from uroporphyrinogen III: step 1/1. It participates in cofactor biosynthesis; adenosylcobalamin biosynthesis; sirohydrochlorin from precorrin-2: step 1/1. Its pathway is porphyrin-containing compound metabolism; siroheme biosynthesis; precorrin-2 from uroporphyrinogen III: step 1/1. It functions in the pathway porphyrin-containing compound metabolism; siroheme biosynthesis; siroheme from sirohydrochlorin: step 1/1. The protein operates within porphyrin-containing compound metabolism; siroheme biosynthesis; sirohydrochlorin from precorrin-2: step 1/1. Multifunctional enzyme that catalyzes the SAM-dependent methylations of uroporphyrinogen III at position C-2 and C-7 to form precorrin-2 via precorrin-1. Then it catalyzes the NAD-dependent ring dehydrogenation of precorrin-2 to yield sirohydrochlorin. Finally, it catalyzes the ferrochelation of sirohydrochlorin to yield siroheme. This is Siroheme synthase from Salmonella choleraesuis (strain SC-B67).